The following is a 635-amino-acid chain: Chaperone protein DnaK (635 aa).

Position 198 is a phosphothreonine; by autocatalysis (Thr-198). The tract at residues 598–635 (YAKAQPGEEQAGGAPHEGEAKDEKVVDADFEEVKEDKK) is disordered. A compositionally biased stretch (basic and acidic residues) spans 613-624 (HEGEAKDEKVVD). Positions 625-635 (ADFEEVKEDKK) are enriched in acidic residues.

This sequence belongs to the heat shock protein 70 family.

Acts as a chaperone. The chain is Chaperone protein DnaK from Geotalea uraniireducens (strain Rf4) (Geobacter uraniireducens).